We begin with the raw amino-acid sequence, 376 residues long: tRNA-specific 2-thiouridylase MnmA (376 aa).

Residues 14 to 21 and Met-40 each bind ATP; that span reads GMSGGVDS. The interval 100–102 is interaction with target base in tRNA; that stretch reads NPD. Cys-105 serves as the catalytic Nucleophile. Cys-105 and Cys-202 are disulfide-bonded. Gly-129 is an ATP binding site. The tract at residues 152–154 is interaction with tRNA; sequence KDQ. Cys-202 functions as the Cysteine persulfide intermediate in the catalytic mechanism. The interval 315–316 is interaction with tRNA; it reads RY.

This sequence belongs to the MnmA/TRMU family.

It is found in the cytoplasm. It catalyses the reaction S-sulfanyl-L-cysteinyl-[protein] + uridine(34) in tRNA + AH2 + ATP = 2-thiouridine(34) in tRNA + L-cysteinyl-[protein] + A + AMP + diphosphate + H(+). Catalyzes the 2-thiolation of uridine at the wobble position (U34) of tRNA, leading to the formation of s(2)U34. The protein is tRNA-specific 2-thiouridylase MnmA of Lactococcus lactis subsp. lactis (strain IL1403) (Streptococcus lactis).